The following is a 338-amino-acid chain: Glycerol-3-phosphate dehydrogenase [NAD(P)+] (338 aa).

Trp-20 and Lys-110 together coordinate NADPH. Sn-glycerol 3-phosphate contacts are provided by Lys-110, Gly-141, and Ser-143. Ala-145 provides a ligand contact to NADPH. Sn-glycerol 3-phosphate-binding residues include Lys-197, Asp-250, Ser-260, Arg-261, and Asn-262. Lys-197 serves as the catalytic Proton acceptor. Arg-261 is an NADPH binding site. Glu-287 lines the NADPH pocket.

It belongs to the NAD-dependent glycerol-3-phosphate dehydrogenase family.

The protein localises to the cytoplasm. It catalyses the reaction sn-glycerol 3-phosphate + NAD(+) = dihydroxyacetone phosphate + NADH + H(+). The enzyme catalyses sn-glycerol 3-phosphate + NADP(+) = dihydroxyacetone phosphate + NADPH + H(+). It functions in the pathway membrane lipid metabolism; glycerophospholipid metabolism. Catalyzes the reduction of the glycolytic intermediate dihydroxyacetone phosphate (DHAP) to sn-glycerol 3-phosphate (G3P), the key precursor for phospholipid synthesis. The chain is Glycerol-3-phosphate dehydrogenase [NAD(P)+] from Aster yellows witches'-broom phytoplasma (strain AYWB).